Reading from the N-terminus, the 235-residue chain is Replication protein (235 aa).

A DNA-binding site is contributed by Tyr149.

Belongs to the Gram-positive plasmids replication protein type 1 family.

In terms of biological role, produces a single-strand nick in a specific site of the plasmid, and this nick results in single-strand replication by rolling circle mechanism. This is Replication protein (repB) from Bacillus sp.